The chain runs to 202 residues: Holliday junction resolvase RecU (202 aa).

The Mg(2+) site is built by Thr85, Asp87, Glu100, and Gln119.

This sequence belongs to the RecU family. Mg(2+) serves as cofactor.

It localises to the cytoplasm. The enzyme catalyses Endonucleolytic cleavage at a junction such as a reciprocal single-stranded crossover between two homologous DNA duplexes (Holliday junction).. Functionally, endonuclease that resolves Holliday junction intermediates in genetic recombination. Cleaves mobile four-strand junctions by introducing symmetrical nicks in paired strands. Promotes annealing of linear ssDNA with homologous dsDNA. Required for DNA repair, homologous recombination and chromosome segregation. This chain is Holliday junction resolvase RecU, found in Streptococcus equi subsp. equi (strain 4047).